The chain runs to 70 residues: MKQDIHPKYEEITATCSCGNVMKIRSTLGKDINLDVCSSCHPFYTGKQRNVDTGGRVDRFKKRFGALGKK.

Residues Cys16, Cys18, Cys37, and Cys40 each contribute to the Zn(2+) site.

It belongs to the bacterial ribosomal protein bL31 family. Type A subfamily. Part of the 50S ribosomal subunit. Zn(2+) is required as a cofactor.

Binds the 23S rRNA. This is Large ribosomal subunit protein bL31 from Alteromonas mediterranea (strain DSM 17117 / CIP 110805 / LMG 28347 / Deep ecotype).